Here is a 403-residue protein sequence, read N- to C-terminus: MCSIGEDDFGDTGGLHAMTAGGPVQIATGGTGECQKCGQHSDDLFKVNFRSEECRDCFLNYARHKFRAALGAAKALPRDSDVLLLLDGSIESIVLLDMLHYAQTQNTFKRLHCQAKVLYLDESVVQEQQSLDIDRLQKLQDRYTPFDLFVIELGTDLSNLRPLKNYTPKTSREESDLKIKLDKLRTLSARQDYLQQQRKRFLASVAHQLNCTHVFVPSISKDLATQFLTSIALGRGGSAALDVALCDDRLDHDIKLLRPLKDLNEQEVQLYVRARNLEDLKLGPSLATYGQEKGETASLQNLTAAFVRNLQENYAATVSTVFRTGNKIAPNRHVDQDMCQQCQSPLDSLLSDTLLAIEYSRVVSLEGSKLSNHNNDLEQLSMQRLNKDDRLCHACRNVQDEYL.

This sequence belongs to the CTU2/NCS2 family.

Its subcellular location is the cytoplasm. Its pathway is tRNA modification; 5-methoxycarbonylmethyl-2-thiouridine-tRNA biosynthesis. Plays a central role in 2-thiolation of mcm(5)S(2)U at tRNA wobble positions of tRNA(Lys), tRNA(Glu) and tRNA(Gln). May act by forming a heterodimer with NCS6/CTU1 that ligates sulfur from thiocarboxylated URM1 onto the uridine of tRNAs at wobble position. The protein is Cytoplasmic tRNA 2-thiolation protein 2 of Drosophila willistoni (Fruit fly).